The sequence spans 418 residues: D-amino acid dehydrogenase (418 aa).

An FAD-binding site is contributed by 3–17 (VTILGAGVVGVTSAW).

Belongs to the DadA oxidoreductase family. Requires FAD as cofactor.

The catalysed reaction is a D-alpha-amino acid + A + H2O = a 2-oxocarboxylate + AH2 + NH4(+). The protein operates within amino-acid degradation; D-alanine degradation; NH(3) and pyruvate from D-alanine: step 1/1. Oxidative deamination of D-amino acids. The protein is D-amino acid dehydrogenase of Agrobacterium fabrum (strain C58 / ATCC 33970) (Agrobacterium tumefaciens (strain C58)).